Reading from the N-terminus, the 198-residue chain is dTTP/UTP pyrophosphatase (198 aa).

The active-site Proton acceptor is the aspartate 72.

The protein belongs to the Maf family. YhdE subfamily. The cofactor is a divalent metal cation.

The protein localises to the cytoplasm. It catalyses the reaction dTTP + H2O = dTMP + diphosphate + H(+). It carries out the reaction UTP + H2O = UMP + diphosphate + H(+). Functionally, nucleoside triphosphate pyrophosphatase that hydrolyzes dTTP and UTP. May have a dual role in cell division arrest and in preventing the incorporation of modified nucleotides into cellular nucleic acids. This is dTTP/UTP pyrophosphatase from Pseudomonas fluorescens (strain Pf0-1).